Reading from the N-terminus, the 931-residue chain is Envelope glycoprotein B (931 aa).

A signal peptide spans 1 to 71 (MSPCGYYSKW…FSMFVTAVVS (71 aa)). Residues 72 to 786 (VSPSSFYESL…HGFTTFLSNP (715 aa)) lie on the Virion surface side of the membrane. 5 disulfides stabilise this stretch: Cys-122-Cys-584, Cys-139-Cys-540, Cys-213-Cys-277, Cys-369-Cys-417, and Cys-608-Cys-645. Asn-147 carries N-linked (GlcNAc...) asparagine; by host glycosylation. Residues 179–185 (AWAGSSY) form an involved in fusion and/or binding to host membrane region. The N-linked (GlcNAc...) asparagine; by host glycan is linked to Asn-257. The involved in fusion and/or binding to host membrane stretch occupies residues 264-271 (GTPGTYRT). N-linked (GlcNAc...) asparagine; by host glycosylation is found at Asn-435, Asn-503, Asn-620, and Asn-686. Hydrophobic membrane proximal region stretches follow at residues 731-784 (IDKV…TFLS) and 764-784 (VVLG…TFLS). The helical transmembrane segment at 787–807 (FGALAVGLLVLAGLVAAFFAY) threads the bilayer. Over 808-931 (RYVLKLKTSP…RVRTENVTGV (124 aa)) the chain is Intravirion. The short motif at 881–884 (YMTL) is the Golgi targeting element. The Internalization motif signature appears at 920–923 (YSRV).

This sequence belongs to the herpesviridae glycoprotein B family. In terms of assembly, homotrimer; disulfide-linked. Binds to heparan sulfate proteoglycans. Interacts with gH/gL heterodimer. In terms of processing, a proteolytic cleavage by host furin generates two subunits that remain linked by disulfide bonds.

The protein resides in the virion membrane. The protein localises to the host cell membrane. Its subcellular location is the host endosome membrane. It localises to the host Golgi apparatus membrane. Its function is as follows. Envelope glycoprotein that forms spikes at the surface of virion envelope. Essential for the initial attachment to heparan sulfate moieties of the host cell surface proteoglycans. Involved in fusion of viral and cellular membranes leading to virus entry into the host cell. Following initial binding to its host receptors, membrane fusion is mediated by the fusion machinery composed at least of gB and the heterodimer gH/gL. May be involved in the fusion between the virion envelope and the outer nuclear membrane during virion egress. The sequence is that of Envelope glycoprotein B from Varicella-zoster virus (strain Oka vaccine) (HHV-3).